The following is a 618-amino-acid chain: UvrABC system protein C (618 aa).

A GIY-YIG domain is found at 13 to 92 (DKPGVYLMKN…IKKYRPKYNI (80 aa)). The UVR domain occupies 204 to 239 (LDIVENFKLNMEKAAENLEFEKAAMLRDKINIIEKI).

The protein belongs to the UvrC family. As to quaternary structure, interacts with UvrB in an incision complex.

It localises to the cytoplasm. Its function is as follows. The UvrABC repair system catalyzes the recognition and processing of DNA lesions. UvrC both incises the 5' and 3' sides of the lesion. The N-terminal half is responsible for the 3' incision and the C-terminal half is responsible for the 5' incision. This chain is UvrABC system protein C, found in Clostridium botulinum (strain Loch Maree / Type A3).